Here is a 322-residue protein sequence, read N- to C-terminus: Hydroxypyruvate reductase (322 aa).

Residues 160–161, aspartate 180, 211–212, 238–240, and aspartate 264 contribute to the NAD(+) site; these read RI, CP, and NSR. Residue arginine 240 is part of the active site. The active site involves glutamate 269. Catalysis depends on histidine 288, which acts as the Proton donor.

Belongs to the D-isomer specific 2-hydroxyacid dehydrogenase family.

It catalyses the reaction (R)-glycerate + NAD(+) = 3-hydroxypyruvate + NADH + H(+). Its pathway is carbohydrate metabolism. Functionally, involved in catabolism of D-apiose. Catalyzes the reduction of 3-hydroxypyruvate to glycerate. The polypeptide is Hydroxypyruvate reductase (Blautia hydrogenotrophica (strain DSM 10507 / JCM 14656 / S5a33) (Ruminococcus hydrogenotrophicus)).